A 339-amino-acid polypeptide reads, in one-letter code: Anthranilate phosphoribosyltransferase (339 aa).

5-phospho-alpha-D-ribose 1-diphosphate is bound by residues G79, G82–D83, T87, N89–T92, K107–S115, and S119. G79 provides a ligand contact to anthranilate. S91 provides a ligand contact to Mg(2+). Position 110 (N110) interacts with anthranilate. R165 lines the anthranilate pocket. Mg(2+) is bound by residues D224 and E225.

It belongs to the anthranilate phosphoribosyltransferase family. Homodimer. Requires Mg(2+) as cofactor.

The enzyme catalyses N-(5-phospho-beta-D-ribosyl)anthranilate + diphosphate = 5-phospho-alpha-D-ribose 1-diphosphate + anthranilate. It functions in the pathway amino-acid biosynthesis; L-tryptophan biosynthesis; L-tryptophan from chorismate: step 2/5. Catalyzes the transfer of the phosphoribosyl group of 5-phosphorylribose-1-pyrophosphate (PRPP) to anthranilate to yield N-(5'-phosphoribosyl)-anthranilate (PRA). The chain is Anthranilate phosphoribosyltransferase from Caldivirga maquilingensis (strain ATCC 700844 / DSM 13496 / JCM 10307 / IC-167).